A 153-amino-acid polypeptide reads, in one-letter code: Nucleoside diphosphate kinase (153 aa).

Lysine 13, phenylalanine 61, arginine 89, threonine 95, arginine 106, and asparagine 116 together coordinate ATP. Histidine 119 serves as the catalytic Pros-phosphohistidine intermediate.

Belongs to the NDK family. It depends on Mg(2+) as a cofactor.

The protein resides in the cytoplasm. It is found in the cell membrane. The catalysed reaction is a 2'-deoxyribonucleoside 5'-diphosphate + ATP = a 2'-deoxyribonucleoside 5'-triphosphate + ADP. It catalyses the reaction a ribonucleoside 5'-diphosphate + ATP = a ribonucleoside 5'-triphosphate + ADP. Major role in the synthesis of nucleoside triphosphates other than ATP. The ATP gamma phosphate is transferred to the NDP beta phosphate via a ping-pong mechanism, using a phosphorylated active-site intermediate. This Gallus gallus (Chicken) protein is Nucleoside diphosphate kinase.